We begin with the raw amino-acid sequence, 295 residues long: Tetrahydromethanopterin S-methyltransferase subunit E (295 aa).

7 helical membrane-spanning segments follow: residues 4–24 (MITG…AGAA), 60–80 (GEPV…FVLM), 87–107 (VIMA…TYAV), 140–160 (GFIV…PIPG), 161–181 (FAHP…IGAI), 234–254 (YGGP…FWNT), and 255–275 (IVFG…LLII).

Belongs to the MtrE family. As to quaternary structure, the complex is composed of 8 subunits; MtrA, MtrB, MtrC, MtrD, MtrE, MtrF, MtrG and MtrH.

The protein resides in the cell membrane. The enzyme catalyses 5-methyl-5,6,7,8-tetrahydromethanopterin + coenzyme M + 2 Na(+)(in) = 5,6,7,8-tetrahydromethanopterin + methyl-coenzyme M + 2 Na(+)(out). It participates in one-carbon metabolism; methanogenesis from CO(2); methyl-coenzyme M from 5,10-methylene-5,6,7,8-tetrahydromethanopterin: step 2/2. In terms of biological role, part of a complex that catalyzes the formation of methyl-coenzyme M and tetrahydromethanopterin from coenzyme M and methyl-tetrahydromethanopterin. This is an energy-conserving, sodium-ion translocating step. The sequence is that of Tetrahydromethanopterin S-methyltransferase subunit E from Methanothermobacter marburgensis (strain ATCC BAA-927 / DSM 2133 / JCM 14651 / NBRC 100331 / OCM 82 / Marburg) (Methanobacterium thermoautotrophicum).